We begin with the raw amino-acid sequence, 364 residues long: tRNA-specific 2-thiouridylase MnmA (364 aa).

Residues 6-13 and L32 each bind ATP; that span reads AMSGGVDS. Residue C101 is the Nucleophile of the active site. Cysteines 101 and 193 form a disulfide. Residue G125 participates in ATP binding. The segment at 143–145 is interaction with tRNA; the sequence is KDQ. C193 functions as the Cysteine persulfide intermediate in the catalytic mechanism.

It belongs to the MnmA/TRMU family.

Its subcellular location is the cytoplasm. It carries out the reaction S-sulfanyl-L-cysteinyl-[protein] + uridine(34) in tRNA + AH2 + ATP = 2-thiouridine(34) in tRNA + L-cysteinyl-[protein] + A + AMP + diphosphate + H(+). Catalyzes the 2-thiolation of uridine at the wobble position (U34) of tRNA, leading to the formation of s(2)U34. This Rhodococcus opacus (strain B4) protein is tRNA-specific 2-thiouridylase MnmA.